The primary structure comprises 249 residues: Ciliogenesis and planar polarity effector 2 (249 aa).

The small GTPase-like stretch occupies residues 46–249; that stretch reads PADVAAYKVF…VIAGLVGGAE (204 aa). Residues 58–65 and 171–174 each bind GTP; these read GKSGVGKT and TKLD.

The protein belongs to the small GTPase superfamily. Rab family. Interacts with fuz.

The protein localises to the cytoplasm. It is found in the cytoskeleton. Its subcellular location is the cilium basal body. In terms of biological role, potential effector of the planar cell polarity signaling pathway. Plays a role in targeted membrane trafficking most probably at the level of vesicle fusion with membranes. Involved in cilium biogenesis by regulating the transport of cargo proteins to the basal body and to the apical tips of cilia. More generally involved in exocytosis in secretory cells. The chain is Ciliogenesis and planar polarity effector 2 from Xenopus laevis (African clawed frog).